The primary structure comprises 85 residues: MGLLDFLKSKKNTAETAKNRLQIIIAQERNHRGGPDYLPLMQRELLEVIKKYVNIDADAVRVDLVKDGEHDVLDITVALPEDGDK.

It belongs to the MinE family.

Its function is as follows. Prevents the cell division inhibition by proteins MinC and MinD at internal division sites while permitting inhibition at polar sites. This ensures cell division at the proper site by restricting the formation of a division septum at the midpoint of the long axis of the cell. The chain is Cell division topological specificity factor from Xanthomonas campestris pv. campestris (strain 8004).